The chain runs to 263 residues: Ribonuclease HII (263 aa).

The 189-residue stretch at 74–262 folds into the RNase H type-2 domain; the sequence is EHVAGLDEVG…VQETAATRQT (189 aa). 3 residues coordinate a divalent metal cation: Asp80, Glu81, and Asp172.

The protein belongs to the RNase HII family. The cofactor is Mn(2+). Mg(2+) is required as a cofactor.

It is found in the cytoplasm. The catalysed reaction is Endonucleolytic cleavage to 5'-phosphomonoester.. In terms of biological role, endonuclease that specifically degrades the RNA of RNA-DNA hybrids. The chain is Ribonuclease HII (rnhB) from Halalkalibacterium halodurans (strain ATCC BAA-125 / DSM 18197 / FERM 7344 / JCM 9153 / C-125) (Bacillus halodurans).